The primary structure comprises 502 residues: Probable cytosol aminopeptidase 2 (502 aa).

Mn(2+) contacts are provided by Lys-269 and Asp-274. Residue Lys-281 is part of the active site. Residues Asp-292, Asp-351, and Glu-353 each contribute to the Mn(2+) site. The active site involves Arg-355.

Belongs to the peptidase M17 family. The cofactor is Mn(2+).

It localises to the cytoplasm. The catalysed reaction is Release of an N-terminal amino acid, Xaa-|-Yaa-, in which Xaa is preferably Leu, but may be other amino acids including Pro although not Arg or Lys, and Yaa may be Pro. Amino acid amides and methyl esters are also readily hydrolyzed, but rates on arylamides are exceedingly low.. The enzyme catalyses Release of an N-terminal amino acid, preferentially leucine, but not glutamic or aspartic acids.. Its function is as follows. Presumably involved in the processing and regular turnover of intracellular proteins. Catalyzes the removal of unsubstituted N-terminal amino acids from various peptides. This Shewanella oneidensis (strain ATCC 700550 / JCM 31522 / CIP 106686 / LMG 19005 / NCIMB 14063 / MR-1) protein is Probable cytosol aminopeptidase 2 (pepA2).